Reading from the N-terminus, the 301-residue chain is tRNA pseudouridine synthase B (301 aa).

Asp-47 (nucleophile) is an active-site residue.

This sequence belongs to the pseudouridine synthase TruB family. Type 1 subfamily.

The catalysed reaction is uridine(55) in tRNA = pseudouridine(55) in tRNA. In terms of biological role, responsible for synthesis of pseudouridine from uracil-55 in the psi GC loop of transfer RNAs. This Cereibacter sphaeroides (strain ATCC 17025 / ATH 2.4.3) (Rhodobacter sphaeroides) protein is tRNA pseudouridine synthase B.